Reading from the N-terminus, the 117-residue chain is uncharacterized protein (117 aa).

The helical transmembrane segment at 76–96 (FIMSSGCFLIASLSCVGLTVF) threads the bilayer.

The protein localises to the membrane. This is an uncharacterized protein from Saccharomyces cerevisiae (strain ATCC 204508 / S288c) (Baker's yeast).